Here is a 191-residue protein sequence, read N- to C-terminus: Protein HP-20 homolog (191 aa).

A signal peptide spans 1–16; sequence MADLRILVSIILMTNA. The 37-residue stretch at 22–58 folds into the Collagen-like domain; it reads GCTGPPGPPGHPGPPGIRGPPGIRGIPGLPGPPGTPG. The segment at 22-61 is disordered; sequence GCTGPPGPPGHPGPPGIRGPPGIRGIPGLPGPPGTPGPSV. Residues 26 to 39 show a composition bias toward pro residues; sequence PPGPPGHPGPPGIR. The region spanning 64–191 is the C1q domain; the sequence is PCHRQSAFTV…VTIYFSGFLT (128 aa).

The protein resides in the secreted. The sequence is that of Protein HP-20 homolog from Bos taurus (Bovine).